Consider the following 488-residue polypeptide: Envelope glycoprotein gp62 (488 aa).

The N-terminal stretch at 1 to 20 is a signal peptide; sequence MGKFLATLILFFQFCPLILG. Topologically, residues 21–442 are extracellular; that stretch reads DYSPSCCTLT…LGLSQWAREA (422 aa). Asparagine 140 and asparagine 222 each carry an N-linked (GlcNAc...) asparagine; by host glycan. The CXXC motif lies at 225 to 228; that stretch reads CIVC. Intrachain disulfides connect cysteine 225–cysteine 228, cysteine 225–cysteine 401, and cysteine 393–cysteine 400. N-linked (GlcNAc...) asparagine; by host glycans are attached at residues asparagine 244 and asparagine 272. The tract at residues 313 to 333 is fusion peptide; the sequence is AVPVAVWLVSALAMGAGVAGG. Positions 327–339 are gly-rich; it reads GAGVAGGITGSMS. Coiled coils occupy residues 340 to 385 and 397 to 429; these read LASG…LDLL and QEQC…GWGL. The tract at residues 376 to 392 is immunosuppression; sequence AQNRRGLDLLFWEQGGL. Positions 393-401 match the CX6CC motif; sequence CKALQEQCC. N-linked (GlcNAc...) asparagine; by host glycosylation is present at asparagine 404. The helical transmembrane segment at 443–463 threads the bilayer; sequence LQTGITLVALLLLVILAGPCI. Residue cysteine 462 is the site of S-palmitoyl cysteine; by host attachment. Over 464 to 488 the chain is Cytoplasmic; sequence LRQLRHLPSRVRYPHYSLINPESSL.

In terms of assembly, the mature envelope protein (Env) consists of a trimer of SU-TM heterodimers attached by a labile interchain disulfide bond. In terms of processing, specific enzymatic cleavages in vivo yield mature proteins. Envelope glycoproteins are synthesized as an inactive precursor that is N-glycosylated and processed likely by host cell furin or by a furin-like protease in the Golgi to yield the mature SU and TM proteins. The cleavage site between SU and TM requires the minimal sequence [KR]-X-[KR]-R. Post-translationally, the CXXC motif is highly conserved across a broad range of retroviral envelope proteins. It is thought to participate in the formation of a labile disulfide bond possibly with the CX6CC motif present in the transmembrane protein. Isomerization of the intersubunit disulfide bond to an SU intrachain disulfide bond is thought to occur upon receptor recognition in order to allow membrane fusion. The transmembrane protein is palmitoylated.

It localises to the virion membrane. Its subcellular location is the host cell membrane. Functionally, the surface protein (SU) attaches the virus to the host cell by binding to its receptor. This interaction triggers the refolding of the transmembrane protein (TM) and is thought to activate its fusogenic potential by unmasking its fusion peptide. Fusion occurs at the host cell plasma membrane. Its function is as follows. The transmembrane protein (TM) acts as a class I viral fusion protein. Under the current model, the protein has at least 3 conformational states: pre-fusion native state, pre-hairpin intermediate state, and post-fusion hairpin state. During viral and target cell membrane fusion, the coiled coil regions (heptad repeats) assume a trimer-of-hairpins structure, positioning the fusion peptide in close proximity to the C-terminal region of the ectodomain. The formation of this structure appears to drive apposition and subsequent fusion of viral and target cell membranes. Membranes fusion leads to delivery of the nucleocapsid into the cytoplasm. This is Envelope glycoprotein gp62 (env) from Human T-cell leukemia virus 1 (strain Japan MT-2 subtype A) (HTLV-1).